Here is a 1066-residue protein sequence, read N- to C-terminus: MEPGKRRTKDDTWKADDLRKHLWAIQSGGSKEERKHREKKLRKESEMDLPEHKEPRCRDPDQDARSRDRVAEVHTAKESPRGERDRDRQRERRRDAKDREKEKLKEKHREAEKSHSRGKDREKEKDRRARKEELRQTVAHHNLLGQETRDRQLLERAERKGRSVSKVRSEEKDEDSERGDEDRERRYRERKLQYGDSKDNPLKYWLYKEEGERRHRKPREPDRDNKHREKSSTREKREKYSKEKSNSFSDKGEERHKEKRHKEGFHFDDERHQSNVDRKEKSAKDEPRKRESQNGEHRNRGASSKRDGTSSQHAENLVRNHGKDKDSRRKHGHEEGSSVWWKLDQRPGGEETVEIEKEETDLENARADAYTASCEDDFEDYEDDFEVCDGDDDESSNEPESREKLEELPLAQKKEIQEIQRAINAENERIGELSLKLFQKRGRTEFEKEPRTDTNSSPSRASVCGIFVDFASASHRQKSRTQALKQKMRSTKLLRLIDLDFSFTFSLLDLPPVNEYDMYIRNFGKKNTKQAYVQCNEDNVERDIQTEEIETREVWTQHPGESTVVSGGSEQRDTSDAVVMPKIDTPRLCSFLRAACQVMAVLLEEDRLAAEPSWNLRAQDRALYFSDSSSQLNTSLPFLQNRKVSSLHTSRVQRQMVVSVHDLPEKSFVPLLDSKYVLCVWDIWQPSGPQKVLICESQVTCCCLSPLKAFLLFAGTAHGSVVVWDLREDSRLHYSVTLSDGFWTFRTATFSTDGILTSVNHRSPLQAVEPISTSVHKKQSFVLSPFSTQEEMSGLSFHIASLDESGVLNVWVVVELPKADIAGSISDLGLMPGGRVKLVHSALIQLGDSLSHKGNEFWGTTQTLNVKFLPSDPNHFIIGTDMGLISHGTRQDLRVAPKLFKPQQHGIRPVKVNVIDFSPFGEPIFLAGCSDGSIRLHQLSSAFPLLQWDSSTDSHAVTGLQWSPTRPAVFLVQDDTSNIYIWDLLQSDLGPVAKQQVSPNRLVAMAAVGEPEKAGGSFLALVLARASGSIDIQHLKRRWAAPEVDECNRLRLLLQEALWPEGKLHK.

2 disordered regions span residues L22–R366 and Y381–L408. At S30 the chain carries Phosphoserine. Composition is skewed to basic and acidic residues over residues S30 to R135, E147 to E171, D180 to H256, G264 to G308, and N316 to G336. A Phosphoserine modification is found at S247. 2 stretches are compositionally biased toward acidic residues: residues E351–L362 and Y381–N397. The span at P399 to L408 shows a compositional bias: basic and acidic residues. Positions A473 to R552 are binding to the DYNLT2B-DYNLT1/DYNLT3 dimer. WD repeat units lie at residues I694–Y734, V775–I821, I907–Q947, and T952–V992.

The protein belongs to the dynein light intermediate chain family. In terms of assembly, intermediate chain of the cytoplasmic dynein complex 2, a multisubunit complex, composed at least of eleven different proteins. The cytoplasmic dynein 2 complex consists of two catalytic heavy chains (HCs) and a number of non-catalytic subunits presented by intermediate chains (ICs), light intermediate chains (LICs) and light chains (LCs). Among them, a heavy chain (DYNC2H1), two intermediate chains (DYNC2I2 and DYNC2I1), a light intermediate chain (DYNC2LI1), and a light chain (DYNLT2B) are unique to the cytoplasmic dynein complex 2, but a subset of the light chains are also shared by dynein-1 and dynein-2 complexes. Interacts with DYNC2I2; their C-terminal domains each bind a copy of the heavy chain, and their extended N-terminal regions are held together by an array of light chain dimers. Interacts with DYNLT2B. Interacts (via the N-terminal half) with DYNLT2B-DYNLT1 dimer or with DYNLT2B-DYNLT3 dimer; this interaction is crucial for retrograde trafficking of ciliary proteins. As to expression, expressed in chondrocytes (at protein level).

The protein resides in the cell projection. It localises to the cilium. Its subcellular location is the cytoplasm. It is found in the cytoskeleton. The protein localises to the microtubule organizing center. The protein resides in the centrosome. In terms of biological role, acts as one of several non-catalytic accessory components of the cytoplasmic dynein 2 complex (dynein-2 complex), a motor protein complex that drives the movement of cargos along microtubules within cilia and flagella in concert with the intraflagellar transport (IFT) system. DYNC2I1 plays a major role in retrograde ciliary protein trafficking in cilia and flagella. Also requires to maintain a functional transition zone. The chain is Cytoplasmic dynein 2 intermediate chain 1 from Homo sapiens (Human).